The following is a 152-amino-acid chain: FMN reductase (NADH) RutF (152 aa).

This sequence belongs to the non-flavoprotein flavin reductase family. RutF subfamily.

It catalyses the reaction FMNH2 + NAD(+) = FMN + NADH + 2 H(+). Its function is as follows. Catalyzes the reduction of FMN to FMNH2 which is used to reduce pyrimidine by RutA via the Rut pathway. This Shigella dysenteriae serotype 1 (strain Sd197) protein is FMN reductase (NADH) RutF.